A 419-amino-acid chain; its full sequence is MGIKERNAPSQYKQSSRKNKRAWRKNIDLEDIESGLEQTRDEEIKGGNVEHKPNDALFVIDTLGDDRIAKRSRKKIKPLKVDQILENKSSIEKVHSHLTNNSTESNKKGKIFSRKELNRLQALVYKNKDGLTATSAASELKNTKQPKESYDVWETNPTVTIPVKRPSTLSKLPESLTENNAKVPNVVIADPGMSYNPDAAAWMKLLDTKGSEELKKEQKRISELEEKERIQKKAFEDKGLVSDQDVNHSIDSDDQSEHEQAETPIPSSKNKRKTRSQRNKIRQRREEELRLLEQKKNEELLRTIDKAPAISKKLQQKDKAEKFSNKAVSSSTTEIKLKKKKFGKHRLPNNPLEIKLGDELTSSLRELKPEGNLFADRYLSLQQRAMVPPSLPVLKKSKYRAKIKEKYSHKDFHLQKNSI.

Disordered stretches follow at residues 1–21 (MGIK…KNKR) and 233–283 (KAFE…KIRQ). Positions 233–261 (KAFEDKGLVSDQDVNHSIDSDDQSEHEQA) are enriched in basic and acidic residues. Phosphoserine occurs at positions 242, 249, 252, and 256. The segment covering 269–283 (KNKRKTRSQRNKIRQ) has biased composition (basic residues).

Belongs to the NOP53 family.

The protein localises to the nucleus. It is found in the nucleolus. The protein resides in the nucleoplasm. May play a role in ribosome biogenesis. This is Ribosome biogenesis protein NOP53 from Schizosaccharomyces pombe (strain 972 / ATCC 24843) (Fission yeast).